Consider the following 191-residue polypeptide: dCTP deaminase (191 aa).

DCTP contacts are provided by residues 112–117 (KSTYAR), 136–138 (TLE), glutamine 157, tyrosine 173, and glutamine 183. Catalysis depends on glutamate 138, which acts as the Proton donor/acceptor.

It belongs to the dCTP deaminase family. In terms of assembly, homotrimer.

It carries out the reaction dCTP + H2O + H(+) = dUTP + NH4(+). It participates in pyrimidine metabolism; dUMP biosynthesis; dUMP from dCTP (dUTP route): step 1/2. Catalyzes the deamination of dCTP to dUTP. This Psychrobacter sp. (strain PRwf-1) protein is dCTP deaminase.